We begin with the raw amino-acid sequence, 1039 residues long: Multidrug resistance protein MdtB (1039 aa).

The next 11 membrane-spanning stretches (helical) occupy residues 15 to 37, 345 to 362, 367 to 389, 396 to 418, 438 to 460, 472 to 494, 535 to 557, 866 to 888, 908 to 930, 967 to 989, and 999 to 1021; these read LFIM…GIIG, FELM…YLFL, ATII…MVFL, LTLM…VIEN, GEIG…PLLF, FAIT…TPMM, HPWL…WVFI, VWLI…ESFI, LMIA…IGIV, ILMT…GVGA, and MVGG…YLLF.

The protein belongs to the resistance-nodulation-cell division (RND) (TC 2.A.6) family. MdtB subfamily. In terms of assembly, part of a tripartite efflux system composed of MdtA, MdtB and MdtC. MdtB forms a heteromultimer with MdtC.

Its subcellular location is the cell inner membrane. In Shigella flexneri, this protein is Multidrug resistance protein MdtB.